Reading from the N-terminus, the 78-residue chain is Large ribosomal subunit protein eL38 (78 aa).

This sequence belongs to the eukaryotic ribosomal protein eL38 family.

This is Large ribosomal subunit protein eL38 (RpL38) from Maconellicoccus hirsutus (Pink hibiscus mealybug).